A 104-amino-acid chain; its full sequence is Large ribosomal subunit protein uL24 (104 aa).

Belongs to the universal ribosomal protein uL24 family. Part of the 50S ribosomal subunit.

Its function is as follows. One of two assembly initiator proteins, it binds directly to the 5'-end of the 23S rRNA, where it nucleates assembly of the 50S subunit. Functionally, one of the proteins that surrounds the polypeptide exit tunnel on the outside of the subunit. This chain is Large ribosomal subunit protein uL24, found in Klebsiella pneumoniae (strain 342).